We begin with the raw amino-acid sequence, 384 residues long: ATP phosphoribosyltransferase regulatory subunit (384 aa).

Belongs to the class-II aminoacyl-tRNA synthetase family. HisZ subfamily. As to quaternary structure, heteromultimer composed of HisG and HisZ subunits.

It is found in the cytoplasm. It functions in the pathway amino-acid biosynthesis; L-histidine biosynthesis; L-histidine from 5-phospho-alpha-D-ribose 1-diphosphate: step 1/9. Its function is as follows. Required for the first step of histidine biosynthesis. May allow the feedback regulation of ATP phosphoribosyltransferase activity by histidine. This Rhodospirillum rubrum (strain ATCC 11170 / ATH 1.1.1 / DSM 467 / LMG 4362 / NCIMB 8255 / S1) protein is ATP phosphoribosyltransferase regulatory subunit.